The following is a 557-amino-acid chain: Leucine-rich glioma-inactivated protein 1 (557 aa).

Positions 1 to 34 (MESERSKRMGNACIPLKRIAYFLCLLSALLLTEG) are cleaved as a signal peptide. Residues 35–72 (KKPAKPKCPAVCTCTKDNALCENARSIPRTVPPDVISL) enclose the LRRNT domain. LRR repeat units lie at residues 92–113 (SLQL…AFIG), 116–137 (HLEY…TFRG), and 140–161 (SLIH…IFKG). The LRRCT domain occupies 173–223 (NSFNCDCKLKWLVEWLGHTNATVEDIYCEGPPEYKKRKINSLSSKDFDCII). N-linked (GlcNAc...) asparagine glycosylation is present at asparagine 192. EAR repeat units lie at residues 225 to 267 (EFAK…EWDH), 271 to 313 (TFRN…KRDS), 317 to 364 (KFIK…KWNG), 366 to 415 (GFYS…QWNK), 419 to 462 (LFTN…KWGG), 464 to 506 (SFQD…NWDA), and 510 to 552 (KFVK…KHVI). Asparagine 277 is a glycosylation site (N-linked (GlcNAc...) asparagine). A glycan (N-linked (GlcNAc...) asparagine) is linked at asparagine 422.

Oligomer. Interacts with KCNA1 within a complex containing KCNA1, KCNA4 and KCNAB1. Part of a complex containing ADAM22, DLG4/PSD95 and CACNG2/Stargazin. Can bind to ADAM11 and ADAM23. Glycosylated. As to expression, predominantly expressed in neural tissues, especially in brain. Expression is reduced in low-grade brain tumors and significantly reduced or absent in malignant gliomas. In terms of tissue distribution, expressed in the occipital cortex and hippocampus; higher amounts are observed in the parietal and frontal cortices, putamen, and, particularly, in the temporal neocortex, where it is between 3 and 5 times more abundant than in the hippocampus (at protein level). Expression is absent in the cerebellum. Abundantly expressed in the occipital cortex and weakly expressed in the hippocampus (at protein level).

The protein localises to the secreted. Its subcellular location is the synapse. It localises to the cytoplasm. It is found in the golgi apparatus. The protein resides in the endoplasmic reticulum. In terms of biological role, regulates voltage-gated potassium channels assembled from KCNA1, KCNA4 and KCNAB1. It slows down channel inactivation by precluding channel closure mediated by the KCNAB1 subunit. Ligand for ADAM22 that positively regulates synaptic transmission mediated by AMPA-type glutamate receptors. Plays a role in suppressing the production of MMP1/3 through the phosphatidylinositol 3-kinase/ERK pathway. May play a role in the control of neuroblastoma cell survival. This chain is Leucine-rich glioma-inactivated protein 1 (LGI1), found in Homo sapiens (Human).